A 142-amino-acid chain; its full sequence is Large ribosomal subunit protein uL16 (142 aa).

This sequence belongs to the universal ribosomal protein uL16 family. Part of the 50S ribosomal subunit.

Its function is as follows. Binds 23S rRNA and is also seen to make contacts with the A and possibly P site tRNAs. This is Large ribosomal subunit protein uL16 from Thermosipho melanesiensis (strain DSM 12029 / CIP 104789 / BI429).